Here is a 227-residue protein sequence, read N- to C-terminus: Ribose-5-phosphate isomerase A (227 aa).

Substrate is bound by residues 28-31 (TGST), 81-84 (DGAD), and 94-97 (KGGG). Glu-103 acts as the Proton acceptor in catalysis. A substrate-binding site is contributed by Lys-121.

It belongs to the ribose 5-phosphate isomerase family. In terms of assembly, homodimer.

It carries out the reaction aldehydo-D-ribose 5-phosphate = D-ribulose 5-phosphate. The protein operates within carbohydrate degradation; pentose phosphate pathway; D-ribose 5-phosphate from D-ribulose 5-phosphate (non-oxidative stage): step 1/1. Functionally, catalyzes the reversible conversion of ribose-5-phosphate to ribulose 5-phosphate. The sequence is that of Ribose-5-phosphate isomerase A from Caulobacter vibrioides (strain ATCC 19089 / CIP 103742 / CB 15) (Caulobacter crescentus).